A 242-amino-acid polypeptide reads, in one-letter code: Glutamate transport ATP-binding protein GluA (242 aa).

One can recognise an ABC transporter domain in the interval 2–236 (IKMTGVQKFF…PQTDRAKDFL (235 aa)). An ATP-binding site is contributed by 34-41 (GPSGSGKS).

It belongs to the ABC transporter superfamily. The complex is composed of two ATP-binding proteins (GluA), two transmembrane proteins (GluC and GluD) and a solute-binding protein (GluB).

It localises to the cell membrane. It catalyses the reaction a polar amino acid(out) + ATP + H2O = a polar amino acid(in) + ADP + phosphate + H(+). The enzyme catalyses L-glutamate(out) + ATP + H2O = L-glutamate(in) + ADP + phosphate + H(+). Part of the ABC transporter complex GluABCD involved in glutamate uptake. Probably responsible for energy coupling to the transport system. This chain is Glutamate transport ATP-binding protein GluA, found in Corynebacterium efficiens (strain DSM 44549 / YS-314 / AJ 12310 / JCM 11189 / NBRC 100395).